Here is a 600-residue protein sequence, read N- to C-terminus: Aspartate--tRNA(Asp/Asn) ligase (600 aa).

Glu-174 serves as a coordination point for L-aspartate. The tract at residues 198–201 (QLFK) is aspartate. An L-aspartate-binding site is contributed by Arg-220. ATP contacts are provided by residues 220–222 (RDE) and Gln-229. His-457 lines the L-aspartate pocket. Glu-491 serves as a coordination point for ATP. Arg-498 provides a ligand contact to L-aspartate. 543 to 546 (GLDR) contacts ATP.

This sequence belongs to the class-II aminoacyl-tRNA synthetase family. Type 1 subfamily. In terms of assembly, homodimer.

It is found in the cytoplasm. It carries out the reaction tRNA(Asx) + L-aspartate + ATP = L-aspartyl-tRNA(Asx) + AMP + diphosphate. Aspartyl-tRNA synthetase with relaxed tRNA specificity since it is able to aspartylate not only its cognate tRNA(Asp) but also tRNA(Asn). Reaction proceeds in two steps: L-aspartate is first activated by ATP to form Asp-AMP and then transferred to the acceptor end of tRNA(Asp/Asn). In Burkholderia multivorans (strain ATCC 17616 / 249), this protein is Aspartate--tRNA(Asp/Asn) ligase.